A 317-amino-acid chain; its full sequence is MSSLGGGSQDAGGSSSSSNTNSSSGSGQKAGGTDKSTAVAATTAPTSVADDAPPPERRNKSGIISEPLNKSLRRSRPLSHYSSFGSSGGGGSMMGVESADKAAAAAASLLANGHDLAAAMAVDKSNPTSKHKSGAVASLLSKAERATELAAEGQLTLQQFAQSTEMLKRVVQEHLPLMSEAGAGLPDMEAVAGAEALNGQSDFPYLGAFPINPGLFIMTPAGVFLAESALHMAGLAEYPMQGELASAISSGKKKRKRCGMCAPCRRRINCEQCSSCRNRKTGHQICKFRKCEELKKKPSAALEKVMLPSGAAFRWFQ.

Over residues 1-10 (MSSLGGGSQD) the composition is skewed to gly residues. Positions 1–92 (MSSLGGGSQD…SFGSSGGGGS (92 aa)) are disordered. Low complexity-rich tracts occupy residues 11–27 (AGGS…SGSG) and 36–51 (STAV…VADD). The segment at 251–292 (GKKKRKRCGMCAPCRRRINCEQCSSCRNRKTGHQICKFRKCE) adopts a CXXC-type zinc-finger fold. Positions 252 to 257 (KKKRKR) match the Nuclear localization signal motif. Zn(2+)-binding residues include cysteine 258, cysteine 261, cysteine 264, cysteine 270, cysteine 273, cysteine 276, cysteine 286, and cysteine 291.

Interacts with DVL1. Interacts with RBPJ.

Its subcellular location is the nucleus. The protein localises to the cytoplasm. In terms of biological role, may indirectly participate in activation of the NF-kappa-B and MAPK pathways. Acts as a mediator of BMP4-mediated modulation of canonical Wnt signaling activity in neural stem cells. Required for DNA damage-induced ATM phosphorylation, p53 activation and cell cycle arrest. Involved in myelopoiesis. Binds to the oxygen responsive element of COX4I2 and represses its transcription under hypoxia conditions (4% oxygen), as well as normoxia conditions (20% oxygen). May repress COX4I2 transactivation induced by CHCHD2 and RBPJ. Binds preferentially to DNA containing cytidine-phosphate-guanosine (CpG) dinucleotides over CpH (H=A, T, and C), hemimethylated-CpG and hemimethylated-hydroxymethyl-CpG. This is CXXC-type zinc finger protein 5 (Cxxc5) from Mus musculus (Mouse).